The chain runs to 274 residues: 2,3,4,5-tetrahydropyridine-2,6-dicarboxylate N-succinyltransferase (274 aa).

The substrate site is built by R106 and D143.

Belongs to the transferase hexapeptide repeat family. In terms of assembly, homotrimer.

The protein resides in the cytoplasm. The catalysed reaction is (S)-2,3,4,5-tetrahydrodipicolinate + succinyl-CoA + H2O = (S)-2-succinylamino-6-oxoheptanedioate + CoA. It functions in the pathway amino-acid biosynthesis; L-lysine biosynthesis via DAP pathway; LL-2,6-diaminopimelate from (S)-tetrahydrodipicolinate (succinylase route): step 1/3. The protein is 2,3,4,5-tetrahydropyridine-2,6-dicarboxylate N-succinyltransferase of Paracidovorax citrulli (strain AAC00-1) (Acidovorax citrulli).